The following is a 431-amino-acid chain: Growth-regulating factor 9 (431 aa).

Positions 24 to 59 (WMKAAQLMEFRMQALVYRYIEAGLRVPHHLVVPIWN) constitute a QLQ domain. WRC domains follow at residues 89-133 (ETEP…LVES) and 307-351 (DNEP…VDTT). Short sequence motifs (bipartite nuclear localization signal) lie at residues 94 to 104 (RCRRTDGKKWR), 122 to 129 (RGRKRSRK), 312 to 322 (RCRRTDGKKWR), and 340 to 345 (RGMKKK).

It belongs to the GRF family. Interacts with GIF1. As to expression, detected in the shoot apical meristem (SAM) and in young leaf primordium.

The protein localises to the nucleus. Its function is as follows. Transcription activator that plays a role in the regulation of cell expansion in leaf and cotyledons tissues. Component of a network formed by miR396, the GRFs and their interacting factors (GIFs) acting in the regulation of meristem function, at least partially through the control of cell proliferation. The sequence is that of Growth-regulating factor 9 (GRF9) from Arabidopsis thaliana (Mouse-ear cress).